Consider the following 310-residue polypeptide: Small ribosomal subunit biogenesis GTPase RsgA 2 (310 aa).

The 162-residue stretch at 77-238 (LSKQSHILAA…IIDTPGIKGF (162 aa)) folds into the CP-type G domain. Residues 126–129 (NKVD) and 180–188 (GHSGVGKST) contribute to the GTP site. Zn(2+)-binding residues include Cys-262, Cys-267, His-269, and Cys-275.

Belongs to the TRAFAC class YlqF/YawG GTPase family. RsgA subfamily. Monomer. Associates with 30S ribosomal subunit, binds 16S rRNA. It depends on Zn(2+) as a cofactor.

The protein localises to the cytoplasm. In terms of biological role, one of several proteins that assist in the late maturation steps of the functional core of the 30S ribosomal subunit. Helps release RbfA from mature subunits. May play a role in the assembly of ribosomal proteins into the subunit. Circularly permuted GTPase that catalyzes slow GTP hydrolysis, GTPase activity is stimulated by the 30S ribosomal subunit. The protein is Small ribosomal subunit biogenesis GTPase RsgA 2 of Bacteroides thetaiotaomicron (strain ATCC 29148 / DSM 2079 / JCM 5827 / CCUG 10774 / NCTC 10582 / VPI-5482 / E50).